The primary structure comprises 305 residues: GMP synthase [glutamine-hydrolyzing] subunit B (305 aa).

The region spanning 2–184 (VKPEKFIPKA…LQLPEEICER (183 aa)) is the GMPS ATP-PPase domain. 29-35 (SGGVDSS) contacts ATP.

In terms of assembly, heterodimer composed of a glutamine amidotransferase subunit (A) and a GMP-binding subunit (B).

It catalyses the reaction XMP + L-glutamine + ATP + H2O = GMP + L-glutamate + AMP + diphosphate + 2 H(+). Its pathway is purine metabolism; GMP biosynthesis; GMP from XMP (L-Gln route): step 1/1. In terms of biological role, catalyzes the synthesis of GMP from XMP. This is GMP synthase [glutamine-hydrolyzing] subunit B (guaAB) from Methanosarcina acetivorans (strain ATCC 35395 / DSM 2834 / JCM 12185 / C2A).